Here is a 392-residue protein sequence, read N- to C-terminus: Homoserine O-acetyltransferase (392 aa).

Residues 52-356 (NVVVVLHALT…ICGHDGFLVE (305 aa)) form the AB hydrolase-1 domain. Ser-157 acts as the Nucleophile in catalysis. Arg-227 serves as a coordination point for substrate. Active-site residues include Asp-320 and His-350. Asp-351 contacts substrate. The disordered stretch occupies residues 373–392 (SQSAGPGGAGPGSRKGTTRR).

Belongs to the AB hydrolase superfamily. MetX family. Homodimer.

The protein localises to the cytoplasm. It catalyses the reaction L-homoserine + acetyl-CoA = O-acetyl-L-homoserine + CoA. Its pathway is amino-acid biosynthesis; L-methionine biosynthesis via de novo pathway; O-acetyl-L-homoserine from L-homoserine: step 1/1. Functionally, transfers an acetyl group from acetyl-CoA to L-homoserine, forming acetyl-L-homoserine. This chain is Homoserine O-acetyltransferase, found in Mycolicibacterium paratuberculosis (strain ATCC BAA-968 / K-10) (Mycobacterium paratuberculosis).